The following is a 503-amino-acid chain: Potassium voltage-gated channel subfamily V member 1 (503 aa).

Topologically, residues Met-1–Arg-213 are cytoplasmic. Residues Ile-214–Ser-234 traverse the membrane as a helical segment. At Ala-235 to Glu-246 the chain is on the extracellular side. A helical membrane pass occupies residues Ile-247–Val-267. Residues Arg-268–Asn-279 lie on the Cytoplasmic side of the membrane. Residues Ile-280–Gly-300 form a helical membrane-spanning segment. The Extracellular segment spans residues Ser-301–Arg-312. The chain crosses the membrane as a helical; Voltage-sensor span at residues Ile-313–Gly-334. The Cytoplasmic portion of the chain corresponds to Leu-335–Glu-348. Residues Val-349–Phe-369 form a helical membrane-spanning segment. The Selectivity filter signature appears at Thr-395 to Asp-400. The chain crosses the membrane as a helical span at residues Ile-410–Ile-430. The Cytoplasmic segment spans residues Asn-431 to Phe-503.

This sequence belongs to the potassium channel family. V (TC 1.A.1.2) subfamily. Kv8.1/KCNV1 sub-subfamily. As to quaternary structure, heteromultimer with KCNB1 and KCNB2. Interacts with KCNC4 and KCND1.

It is found in the cell membrane. In terms of biological role, potassium channel subunit that does not form functional channels by itself. Modulates KCNB1 and KCNB2 channel activity by shifting the threshold for inactivation to more negative values and by slowing the rate of inactivation. Can down-regulate the channel activity of KCNB1, KCNB2, KCNC4 and KCND1, possibly by trapping them in intracellular membranes. The protein is Potassium voltage-gated channel subfamily V member 1 (KCNV1) of Bos taurus (Bovine).